We begin with the raw amino-acid sequence, 2036 residues long: Ral GTPase-activating protein subunit alpha-1 (2036 aa).

Disordered regions lie at residues 343–384 (LVSR…SSLC) and 476–497 (EEGE…RNSS). A compositionally biased stretch (basic and acidic residues) spans 345-365 (SREESKNDNADKTDRTTEPEQ). Polar residues-rich tracts occupy residues 366-384 (SHSN…SSLC) and 486-497 (GTNTADHVRNSS). 2 positions are modified to phosphoserine: S711 and S721. The tract at residues 715–753 (SFSRGWSRDQPGQAPMRQRSATTTGSPGTEKARSIVRQK) is disordered. T754 carries the phosphothreonine modification. Phosphoserine is present on S773. Phosphothreonine is present on T778. Phosphoserine is present on residues S797, S860, S861, and S864. 2 disordered regions span residues 849–910 (SGNA…SDSH) and 982–1009 (TITG…STLN). Residues 850–863 (GNASTMTRRGSSPG) show a composition bias toward polar residues. Residues 895 to 910 (SPASAGSSDLISSDSH) show a composition bias toward low complexity. Residues 983–1009 (ITGSESASPVHSPLGSRSQTPSPSTLN) are compositionally biased toward polar residues. A phosphoserine mark is found at S986, S990, S994, and S1000. T1002 is subject to Phosphothreonine. A phosphoserine mark is found at S1004 and S1478. Positions 1327 to 2035 (FTNKTVAHVA…PYHHLPSDAD (709 aa)) are minimal domain that binds to TCF3/E12. Positions 1716–1744 (KQENDVINAILKQHTEEKEFVEKHFNDLN) form a coiled coil. The region spanning 1796-2004 (LRNLDSRQCR…EERARYLQTI (209 aa)) is the Rap-GAP domain.

As to quaternary structure, component of the heterodimeric RalGAP1 complex with RALGAPB. Heterodimerization is required for activity. Interacts with the HLH region of TCF3/isoform E12. In terms of tissue distribution, widely expressed.

The protein resides in the cytoplasm. The protein localises to the nucleus. Catalytic subunit of the heterodimeric RalGAP1 complex which acts as a GTPase activator for the Ras-like small GTPases RALA and RALB. In Homo sapiens (Human), this protein is Ral GTPase-activating protein subunit alpha-1 (RALGAPA1).